The chain runs to 331 residues: Vacuolar protein sorting-associated protein 26B (331 aa).

A disordered region spans residues 310 to 331 (AAQRYEGSNPEPTSAQAKEETD).

This sequence belongs to the VPS26 family. In terms of assembly, component of the heterotrimeric retromer cargo-selective complex (CSC) which is believed to associate with variable sorting nexins to form functionally distinct retromer complex variants.

The protein resides in the cytoplasm. The protein localises to the membrane. Its subcellular location is the endosome. Its function is as follows. Acts as a component of the retromer cargo-selective complex (CSC). The CSC is believed to be the core functional component of retromer or respective retromer complex variants acting to prevent missorting of selected transmembrane cargo proteins into the lysosomal degradation pathway. Retromer mediates retrograde transport of cargo proteins from endosomes to the trans-Golgi network (TGN). This Danio rerio (Zebrafish) protein is Vacuolar protein sorting-associated protein 26B (vps26b).